Consider the following 344-residue polypeptide: Holliday junction branch migration complex subunit RuvB (344 aa).

The segment at 1–185 is large ATPase domain (RuvB-L); the sequence is MTERSDRDVS…FGFTAHMDFY (185 aa). Residues Leu24, Arg25, Gly66, Lys69, Thr70, Ser71, 132-134, Arg175, Tyr185, and Arg222 contribute to the ATP site; that span reads EDF. Thr70 serves as a coordination point for Mg(2+). A small ATPAse domain (RuvB-S) region spans residues 186-256; it reads EPAELERVLA…VAKAALEVYD (71 aa). The interval 259 to 344 is head domain (RuvB-H); the sequence is ELGLDRLDRA…VGASQPGLFE (86 aa). DNA contacts are provided by Arg314 and Arg319.

The protein belongs to the RuvB family. In terms of assembly, homohexamer. Forms an RuvA(8)-RuvB(12)-Holliday junction (HJ) complex. HJ DNA is sandwiched between 2 RuvA tetramers; dsDNA enters through RuvA and exits via RuvB. An RuvB hexamer assembles on each DNA strand where it exits the tetramer. Each RuvB hexamer is contacted by two RuvA subunits (via domain III) on 2 adjacent RuvB subunits; this complex drives branch migration. In the full resolvosome a probable DNA-RuvA(4)-RuvB(12)-RuvC(2) complex forms which resolves the HJ.

Its subcellular location is the cytoplasm. It catalyses the reaction ATP + H2O = ADP + phosphate + H(+). Functionally, the RuvA-RuvB-RuvC complex processes Holliday junction (HJ) DNA during genetic recombination and DNA repair, while the RuvA-RuvB complex plays an important role in the rescue of blocked DNA replication forks via replication fork reversal (RFR). RuvA specifically binds to HJ cruciform DNA, conferring on it an open structure. The RuvB hexamer acts as an ATP-dependent pump, pulling dsDNA into and through the RuvAB complex. RuvB forms 2 homohexamers on either side of HJ DNA bound by 1 or 2 RuvA tetramers; 4 subunits per hexamer contact DNA at a time. Coordinated motions by a converter formed by DNA-disengaged RuvB subunits stimulates ATP hydrolysis and nucleotide exchange. Immobilization of the converter enables RuvB to convert the ATP-contained energy into a lever motion, pulling 2 nucleotides of DNA out of the RuvA tetramer per ATP hydrolyzed, thus driving DNA branch migration. The RuvB motors rotate together with the DNA substrate, which together with the progressing nucleotide cycle form the mechanistic basis for DNA recombination by continuous HJ branch migration. Branch migration allows RuvC to scan DNA until it finds its consensus sequence, where it cleaves and resolves cruciform DNA. This chain is Holliday junction branch migration complex subunit RuvB, found in Mycobacterium tuberculosis (strain ATCC 25177 / H37Ra).